The sequence spans 370 residues: Peptidyl-prolyl cis-trans isomerase D (370 aa).

Ser-5 carries the post-translational modification Phosphoserine. The PPIase cyclophilin-type domain maps to 19–183 (FFDVDIGGER…KLCVIAECGE (165 aa)). An N6-acetyllysine modification is found at Lys-171. The tract at residues 185–215 (KEGDDWGIFPKDGSGDSHPDFPEDADIDLKD) is chaperone activity. Position 198 is a phosphoserine (Ser-198). Residues 214 to 370 (KDVDKILLIS…EKAVYAKMFA (157 aa)) are interaction with HSP90AB1. 3 TPR repeats span residues 223 to 256 (SEDL…VDSS), 273 to 306 (LSCV…DPSN), and 307 to 340 (TKAL…APGD).

The protein belongs to the cyclophilin-type PPIase family. PPIase D subfamily. As to quaternary structure, identified in ESR1 or NR3C1/GCR steroid receptor-chaperone complexes. Found in HSP90 chaperone complexes with kinase clients LCK or EIF2AK1. Two monomers associate with one HSP90 homodimer. Interacts with HSP90AA1. Interacts with HSP90AB1; PPID and FKBP4 compete for binding to HSP90AB1 and the interaction is mutually exclusive with the PPID:HSPA8 interaction. Interacts with HSPA8; PPID and STIP1 but not FKBP4 compete for binding to HSPA8 and the interaction is mutually exclusive with the PPID:HSP90AB1 interaction. Interacts with S100A1 and S100A2; the interactions dissociate the PPID:HSP90AA1 interaction. Interacts with S100A6. Interacts with MYB, ILF2, XRCC6, RACK1 and RPS3. Interacts with cytoplasmic dynein 1 intermediate chain (DYNC1I1 or DYNC1I2).

It is found in the cytoplasm. Its subcellular location is the nucleus. The protein resides in the nucleolus. It localises to the nucleoplasm. The catalysed reaction is [protein]-peptidylproline (omega=180) = [protein]-peptidylproline (omega=0). Less sensitive to inhibition by cyclosporin A than is CYP-18. Functionally, PPIase that catalyzes the cis-trans isomerization of proline imidic peptide bonds in oligopeptides and may therefore assist protein folding. Proposed to act as a co-chaperone in HSP90 complexes such as in unligated steroid receptors heterocomplexes. Different co-chaperones seem to compete for association with HSP90 thus establishing distinct HSP90-co-chaperone-receptor complexes with the potential to exert tissue-specific receptor activity control. May have a preference for estrogen receptor complexes and is not found in glucocorticoid receptor complexes. May be involved in cytoplasmic dynein-dependent movement of the receptor from the cytoplasm to the nucleus. May regulate MYB by inhibiting its DNA-binding activity. Involved in regulation of AHR signaling by promoting the formation of the AHR:ARNT dimer; the function is independent of HSP90 but requires the chaperone activity region. Involved in regulation of UV radiation-induced apoptosis. This chain is Peptidyl-prolyl cis-trans isomerase D, found in Mus musculus (Mouse).